The following is a 1486-amino-acid chain: Chromosome partition protein MukB (1486 aa).

Position 34–41 (34–41 (GGNGAGKS)) interacts with ATP. Coiled coils occupy residues 326–418 (LEAD…QYNQ), 444–480 (LETFQAKELEATEKMLSLEQKMSMAQTAHSQFEQAYQ), and 509–603 (RHLA…RAPV). Positions 666–783 (PGGSEDQRLN…EVPLFGRAAR (118 aa)) are flexible hinge. Coiled-coil stretches lie at residues 835 to 923 (EAEI…AKLE), 977 to 1115 (EMLS…TAKA), and 1209 to 1266 (VEAI…QNVS).

It belongs to the SMC family. MukB subfamily. Homodimerization via its hinge domain. Binds to DNA via its C-terminal region. Interacts, and probably forms a ternary complex, with MukE and MukF via its C-terminal region. The complex formation is stimulated by calcium or magnesium. Interacts with tubulin-related protein FtsZ.

It localises to the cytoplasm. The protein resides in the nucleoid. Its function is as follows. Plays a central role in chromosome condensation, segregation and cell cycle progression. Functions as a homodimer, which is essential for chromosome partition. Involved in negative DNA supercoiling in vivo, and by this means organize and compact chromosomes. May achieve or facilitate chromosome segregation by condensation DNA from both sides of a centrally located replisome during cell division. The chain is Chromosome partition protein MukB from Escherichia coli O157:H7.